A 189-amino-acid polypeptide reads, in one-letter code: MGDKIFHNLSGKTLVATPHVITKGIYHKSLIYMLSHTKEGAIGLIFNRLVNHIDLKSFFKIKNDKITTPVMVPIYLGGPVEHEKGFFLHSSDYNKNLLLDFHNDLAVSSNLEISEDIAFGKGPKHSLFIVGYTAWKPGQLEEELETNLWLVMDCNKEFIFADNPESKWHNALKHLGIDEIHFSSQIGNA.

This sequence belongs to the UPF0301 (AlgH) family.

The chain is UPF0301 protein RAF_ORF0041 from Rickettsia africae (strain ESF-5).